The sequence spans 682 residues: ATP-dependent DNA helicase RecG (682 aa).

The tract at residues 46-139 (ELRDLEEVKH…LKNGPHQEDK (94 aa)) is wedge domain. The 162-residue stretch at 271–432 (DMSSPYRMNR…VFGEMDVSVI (162 aa)) folds into the Helicase ATP-binding domain. Residue 284-291 (GDVGSGKT) participates in ATP binding. The short motif at 385–388 (DEQH) is the DEAH box element. Residues 451–611 (MLDRILAFVE…GFELSEKDLE (161 aa)) form the Helicase C-terminal domain.

It belongs to the helicase family. RecG subfamily. Monomer. Interacts with SSB (sbbA), via the latter's 6 C-terminal residues. Colocalizes with DNA pol III subunit gamma/tau (dnaX).

It is found in the cytoplasm. The protein localises to the nucleoid. The enzyme catalyses Couples ATP hydrolysis with the unwinding of duplex DNA by translocating in the 3'-5' direction.. The catalysed reaction is ATP + H2O = ADP + phosphate + H(+). With respect to regulation, replication fork regression on Holliday junctions (HJ) is inhibited by DisA; DisA inhibits the ATPase activity of RecG. Its function is as follows. Critical role in recombination and DNA repair. Helps process Holliday junction intermediates to mature products by catalyzing branch migration. Has a DNA unwinding activity characteristic of a DNA helicase with 3'-5' polarity. Unwinds branched duplex DNA (Y-DNA), Holliday junction (HJ) DNA and partially replicated forks as well as catalyzing fork reversal/regression. Does not seem to unwind R-loops. Inhibits the diadenylate cyclase (DAC) activity of DisA in the presence but not absence of HJ DNA, possibly by relocating DisA from the junction. This is ATP-dependent DNA helicase RecG from Bacillus subtilis (strain 168).